Consider the following 89-residue polypeptide: Small ribosomal subunit protein uS15 (89 aa).

Belongs to the universal ribosomal protein uS15 family. In terms of assembly, part of the 30S ribosomal subunit. Forms a bridge to the 50S subunit in the 70S ribosome, contacting the 23S rRNA.

In terms of biological role, one of the primary rRNA binding proteins, it binds directly to 16S rRNA where it helps nucleate assembly of the platform of the 30S subunit by binding and bridging several RNA helices of the 16S rRNA. Forms an intersubunit bridge (bridge B4) with the 23S rRNA of the 50S subunit in the ribosome. In Methylococcus capsulatus (strain ATCC 33009 / NCIMB 11132 / Bath), this protein is Small ribosomal subunit protein uS15.